The primary structure comprises 302 residues: MNICGPQRYDKENNTCFNVDQLVEMAKAYNRYLSKTKLNPSRNYHFGDADLINIKSDKKYLLKQFKDRFGKICGSDEICLTHQAFMGELVGEMKDDILFGTFRSEGPSKSTEWLSTIDINQIMVPYENIYPNFKFIGAVPADCDQVSVCPLYNINYDKLMDEGINYIATIFNHDRYGQPGSHWVAMFVDINNGKLYYCDSNGKEPTKYIENSIEKFAQFYKRKTGNDIIYKYNKNSYQKDGSECGVYSCNFIIRMLSGEPFDNIVSNSLSFQEINSCRNVYFRNQPSKFKPHKLCDPTNSGK.

Catalysis depends on residues histidine 182 and aspartate 199. The active-site Nucleophile is the cysteine 244.

It belongs to the peptidase C48 family.

It localises to the virion. This Acanthamoeba polyphaga mimivirus (APMV) protein is Putative thiol protease R355.